We begin with the raw amino-acid sequence, 64 residues long: Large ribosomal subunit protein bL33 (64 aa).

Belongs to the bacterial ribosomal protein bL33 family.

The polypeptide is Large ribosomal subunit protein bL33 (Synechococcus sp. (strain JA-2-3B'a(2-13)) (Cyanobacteria bacterium Yellowstone B-Prime)).